The following is a 152-amino-acid chain: Transcriptional repressor NrdR (152 aa).

The segment at 3-34 is a zinc-finger region; that stretch reads CPHCHHNGSRVIDSRPAEDGMSIRRRRECVNC. The 91-residue stretch at 49-139 folds into the ATP-cone domain; that stretch reads LLVVKKDGTR…VYRQFKDVDA (91 aa).

Belongs to the NrdR family. The cofactor is Zn(2+).

Functionally, negatively regulates transcription of bacterial ribonucleotide reductase nrd genes and operons by binding to NrdR-boxes. The protein is Transcriptional repressor NrdR of Limosilactobacillus fermentum (strain NBRC 3956 / LMG 18251) (Lactobacillus fermentum).